The following is a 4134-amino-acid chain: DNA-dependent protein kinase catalytic subunit (4134 aa).

HEAT repeat units follow at residues 900–937 (VIYL…VAYM), 1000–1036 (QDTV…LKWS), and 1050–1085 (ANTK…YREF). TPR repeat units lie at residues 1265-1305 (YNTF…HDIH) and 1722-1755 (PMSS…SQSP). Serine 2055 carries the phosphoserine; by autocatalysis modification. The TPR 3 repeat unit spans residues 2207 to 2240 (DEILANRLLEFLMKNAFHQKRAVFRHNLEIIKTV). The residue at position 2609 (threonine 2609) is a Phosphothreonine; by autocatalysis. The span at 2611–2629 (ASQSTNRNSSQERSLSISG) shows a compositional bias: polar residues. The tract at residues 2611-2631 (ASQSTNRNSSQERSLSISGSV) is disordered. Serine 2612 is modified (phosphoserine; by autocatalysis). Threonine 2638 and threonine 2647 each carry phosphothreonine; by autocatalysis. Residues 2880–3545 (NVSTSCLASL…IYPFTISSES (666 aa)) form the FAT domain. Positions 3728–4059 (FDERIMVLES…VSYVKRKLTG (332 aa)) constitute a PI3K/PI4K catalytic domain. Residues 3734-3740 (VLESLRK) form a G-loop region. A catalytic loop region spans residues 3925–3933 (GIGDRHLSN). The activation loop stretch occupies residues 3945 to 3970 (GIDFGHAFGSATQFLPVPELMPFRLT). The 33-residue stretch at 4102 to 4134 (DRLSEETQVRCLIDQATDPNLLGRVWEGWEPWM) folds into the FATC domain.

Belongs to the PI3/PI4-kinase family. As to quaternary structure, DNA-PK is a heterotrimer of PRKDC and the Ku dimer (composed of XRCC6/Ku70 and XRCC5/Ku86). Component of the core long-range non-homologous end joining (NHEJ) complex (also named DNA-PK complex) composed of PRKDC, LIG4, XRCC4, XRCC6/Ku70, XRCC5/Ku86 and NHEJ1/XLF. Additional component of the NHEJ complex includes PAXX. Following autophosphorylation, PRKDC dissociates from DNA. Autophosphorylated at two clusters, the T2609 cluster and the S2056 cluster. Autophosphorylated on Ser-2055, Thr-2609, Thr-2638 and Thr-2647. Ser-2055 and Thr-2609 are DNA damage-inducible phosphorylation sites (inducible with ionizing radiation, IR) dephosphorylated by PPP5C. Autophosphorylation induces a conformational change that leads to remodeling of the DNA-PK complex, requisite for efficient end processing and DNA repair. Autophosphorylation in trans within DNA-PK complexes loaded on DNA ends leads to the dissociation of PRKDC from DNA and the transition into the short-range NHEJ complex. Autophosphorylation of the T2609 cluster is required for hematopoietic development and protein synthesis in erythrocytes precursors.

Its subcellular location is the nucleus. The protein localises to the nucleolus. The enzyme catalyses L-seryl-[protein] + ATP = O-phospho-L-seryl-[protein] + ADP + H(+). The catalysed reaction is L-threonyl-[protein] + ATP = O-phospho-L-threonyl-[protein] + ADP + H(+). Its function is as follows. Serine/threonine-protein kinase that acts as a molecular sensor for DNA damage. Involved in DNA nonhomologous end joining (NHEJ) required for double-strand break (DSB) repair and V(D)J recombination. Must be bound to DNA to express its catalytic properties. Promotes processing of hairpin DNA structures in V(D)J recombination by activation of the hairpin endonuclease artemis (DCLRE1C). Recruited by XRCC5 and XRCC6 to DNA ends and is required to (1) protect and align broken ends of DNA, thereby preventing their degradation, (2) and sequester the DSB for repair by NHEJ. Acts as a scaffold protein to aid the localization of DNA repair proteins to the site of damage. The assembly of the DNA-PK complex at DNA ends is also required for the NHEJ ligation step. Found at the ends of chromosomes, suggesting a further role in the maintenance of telomeric stability and the prevention of chromosomal end fusion. As part of the DNA-PK complex, involved in the early steps of ribosome assembly by promoting the processing of precursor rRNA into mature 18S rRNA in the small-subunit processome. Recognizes the substrate consensus sequence [ST]-Q. Phosphorylates 'Ser-139' of histone variant H2AX, thereby regulating DNA damage response mechanism. The polypeptide is DNA-dependent protein kinase catalytic subunit (PRKDC) (Gallus gallus (Chicken)).